A 423-amino-acid chain; its full sequence is Serine hydroxymethyltransferase (423 aa).

(6S)-5,6,7,8-tetrahydrofolate contacts are provided by residues leucine 120 and 124 to 126; that span reads GHL. At lysine 229 the chain carries N6-(pyridoxal phosphate)lysine. 353 to 355 contacts (6S)-5,6,7,8-tetrahydrofolate; that stretch reads SPF.

This sequence belongs to the SHMT family. As to quaternary structure, homodimer. It depends on pyridoxal 5'-phosphate as a cofactor.

The protein resides in the cytoplasm. The enzyme catalyses (6R)-5,10-methylene-5,6,7,8-tetrahydrofolate + glycine + H2O = (6S)-5,6,7,8-tetrahydrofolate + L-serine. The protein operates within one-carbon metabolism; tetrahydrofolate interconversion. Its pathway is amino-acid biosynthesis; glycine biosynthesis; glycine from L-serine: step 1/1. Functionally, catalyzes the reversible interconversion of serine and glycine with tetrahydrofolate (THF) serving as the one-carbon carrier. This reaction serves as the major source of one-carbon groups required for the biosynthesis of purines, thymidylate, methionine, and other important biomolecules. Also exhibits THF-independent aldolase activity toward beta-hydroxyamino acids, producing glycine and aldehydes, via a retro-aldol mechanism. This is Serine hydroxymethyltransferase from Prochlorococcus marinus (strain AS9601).